Reading from the N-terminus, the 271-residue chain is Formamidopyrimidine-DNA glycosylase (271 aa).

Proline 2 serves as the catalytic Schiff-base intermediate with DNA. Catalysis depends on glutamate 3, which acts as the Proton donor. The active-site Proton donor; for beta-elimination activity is lysine 58. 3 residues coordinate DNA: histidine 91, arginine 110, and arginine 152. The FPG-type zinc-finger motif lies at 237-271; it reads SIYGKKGRPCPKCGSAIRMMRLGGRSTFFCPLCQK. Catalysis depends on arginine 261, which acts as the Proton donor; for delta-elimination activity.

The protein belongs to the FPG family. Monomer. It depends on Zn(2+) as a cofactor.

It carries out the reaction Hydrolysis of DNA containing ring-opened 7-methylguanine residues, releasing 2,6-diamino-4-hydroxy-5-(N-methyl)formamidopyrimidine.. The enzyme catalyses 2'-deoxyribonucleotide-(2'-deoxyribose 5'-phosphate)-2'-deoxyribonucleotide-DNA = a 3'-end 2'-deoxyribonucleotide-(2,3-dehydro-2,3-deoxyribose 5'-phosphate)-DNA + a 5'-end 5'-phospho-2'-deoxyribonucleoside-DNA + H(+). Involved in base excision repair of DNA damaged by oxidation or by mutagenic agents. Acts as a DNA glycosylase that recognizes and removes damaged bases. Has a preference for oxidized purines, such as 7,8-dihydro-8-oxoguanine (8-oxoG). Has AP (apurinic/apyrimidinic) lyase activity and introduces nicks in the DNA strand. Cleaves the DNA backbone by beta-delta elimination to generate a single-strand break at the site of the removed base with both 3'- and 5'-phosphates. The protein is Formamidopyrimidine-DNA glycosylase of Geotalea daltonii (strain DSM 22248 / JCM 15807 / FRC-32) (Geobacter daltonii).